A 345-amino-acid chain; its full sequence is Protein RecA (345 aa).

65-72 (GPESSGKT) is an ATP binding site.

The protein belongs to the RecA family.

It is found in the cytoplasm. Its function is as follows. Can catalyze the hydrolysis of ATP in the presence of single-stranded DNA, the ATP-dependent uptake of single-stranded DNA by duplex DNA, and the ATP-dependent hybridization of homologous single-stranded DNAs. It interacts with LexA causing its activation and leading to its autocatalytic cleavage. This chain is Protein RecA, found in Hahella chejuensis (strain KCTC 2396).